A 98-amino-acid polypeptide reads, in one-letter code: Dehydrogenase acuH (98 aa).

It participates in secondary metabolite biosynthesis. Dehydrogenase; part of the gene cluster that mediates the biosynthesis of aculins. The pathway begins with the synthesis of 6-methylsalicylic acid by the polyketide synthase (PKS) acuA via condensation of acetate and malonate units. The 6-methylsalicylic acid decarboxylase acuB then catalyzes the decarboxylation of 6-methylsalicylic acid to yield m-cresol (also known as 3-methylphenol). These first reactions occur in the cytosol. The intermediate m-cresol is then transported into the endoplasmic reticulum where the cytochrome P450 monooxygenase acuC converts it to m-hydroxybenzyl alcohol, which is further converted to gentisyl alcohol by the cytochrome P450 monooxygenase acuD. Gentisyl alcohol is further oxidized by the oxidoreductase acuE that probably catalyzes hydroxylation of the aromatic ring. The aromatic system might then be opened by oxidation through a Baeyer-Villiger type of oxidation, which could be catalyzed by acuF, with the carboxylic acid at C-1 subsequently reduced to an aldehyde by acuG. Subsequently, a hemiacetal is formed, before the dehydrogenase acuH would reduce the double bond between C-4 and C-6. Finally, keto-enol tautomerism results in formation of aculinic acid, which exists as two diastereomers (both R/S configurations at C-1) by non-enzymatic hemiacetal formation. The carboxypeptidase acuI could be involved in the linking of aculinic acid to an aculene A moiety produced by the aculene biosynthesis cluster and which leads to the production of aculin A. AcuI may also be involved in the attachment of proline to aculinic acid to form epi-aculins A and B. This is Dehydrogenase acuH from Aspergillus aculeatus (strain ATCC 16872 / CBS 172.66 / WB 5094).